The chain runs to 949 residues: Glycine dehydrogenase (decarboxylating) (949 aa).

Lysine 704 carries the post-translational modification N6-(pyridoxal phosphate)lysine.

It belongs to the GcvP family. In terms of assembly, the glycine cleavage system is composed of four proteins: P, T, L and H. Requires pyridoxal 5'-phosphate as cofactor.

The catalysed reaction is N(6)-[(R)-lipoyl]-L-lysyl-[glycine-cleavage complex H protein] + glycine + H(+) = N(6)-[(R)-S(8)-aminomethyldihydrolipoyl]-L-lysyl-[glycine-cleavage complex H protein] + CO2. Its function is as follows. The glycine cleavage system catalyzes the degradation of glycine. The P protein binds the alpha-amino group of glycine through its pyridoxal phosphate cofactor; CO(2) is released and the remaining methylamine moiety is then transferred to the lipoamide cofactor of the H protein. This chain is Glycine dehydrogenase (decarboxylating), found in Bacteroides fragilis (strain ATCC 25285 / DSM 2151 / CCUG 4856 / JCM 11019 / LMG 10263 / NCTC 9343 / Onslow / VPI 2553 / EN-2).